The following is a 115-amino-acid chain: Divalent-cation tolerance protein CutA (115 aa).

Cu cation contacts are provided by C19, H86, and H87.

The protein belongs to the CutA family. As to quaternary structure, homotrimer. The cofactor is Cu cation.

Its subcellular location is the cytoplasm. Its function is as follows. Involved in resistance toward heavy metals. In Citrobacter koseri (strain ATCC BAA-895 / CDC 4225-83 / SGSC4696), this protein is Divalent-cation tolerance protein CutA.